We begin with the raw amino-acid sequence, 265 residues long: Acrosomal protein SP-10 (265 aa).

The signal sequence occupies residues 1 to 21 (MNRFLLLMSLYLLGSARGTSS). Positions 62 to 181 (LNTLSEHGSS…EQASGAPISS (120 aa)) are disordered. 16 consecutive repeat copies span residues 66–70 (SEHGS), 71–75 (SEHGS), 85–88 (SGEH), 91–95 (SEHAS), 110–114 (VGEQP), 115–119 (SGEQP), 120–123 (SGEH), 125–129 (SGEQP), 135–139 (SGEQP), 140–144 (SDEQP), 145–148 (SGEH), 150–154 (SGEQP), 155–159 (SGEQA), 160–164 (SGEQP), 165–168 (SGEH), and 170–174 (SGEQA). The tract at residues 66–95 (SEHGSSEHGSSKHTVAEHTSGEHAESEHAS) is 3 X 5 AA repeats of S-E-H-[GA]-S. A compositionally biased stretch (basic and acidic residues) spans 69–110 (GSSEHGSSKHTVAEHTSGEHAESEHASGEPAATEHAEGEHTV). The tract at residues 85–168 (SGEHAESEHA…ASGEQPSGEH (84 aa)) is 4 X 4 AA repeats of S-G-E-H. Residues 110-174 (VGEQPSGEQP…SGEHASGEQA (65 aa)) are 9 X 5 AA repeats of [SV]-G-E-Q-[PSA]. Over residues 152–163 (EQPSGEQASGEQ) the composition is skewed to polar residues. Asn258 carries an N-linked (GlcNAc...) asparagine glycan.

Testis.

The protein localises to the cytoplasmic vesicle. It localises to the secretory vesicle. Its subcellular location is the acrosome. The polypeptide is Acrosomal protein SP-10 (ACRV1) (Homo sapiens (Human)).